The chain runs to 297 residues: HTH-type transcriptional regulator ArgP (297 aa).

An HTH lysR-type domain is found at 4–60 (PDYRTLQALDAVIRERGFERAAQKLCITQSAVSQRIKQLENMFGQPLLVRTVPPRPT). The segment at residues 21–40 (FERAAQKLCITQSAVSQRIK) is a DNA-binding region (H-T-H motif).

It belongs to the LysR transcriptional regulatory family. Homodimer.

Controls the transcription of genes involved in arginine and lysine metabolism. This chain is HTH-type transcriptional regulator ArgP, found in Salmonella arizonae (strain ATCC BAA-731 / CDC346-86 / RSK2980).